A 69-amino-acid chain; its full sequence is UPF0337 protein RB0906 (69 aa).

Belongs to the UPF0337 (CsbD) family.

This chain is UPF0337 protein RB0906, found in Rhizobium meliloti (strain 1021) (Ensifer meliloti).